The sequence spans 397 residues: Acetyl-CoA acetyltransferase (397 aa).

Cys-95 functions as the Acyl-thioester intermediate in the catalytic mechanism. 2 residues coordinate CoA: Tyr-187 and Lys-230. Tyr-187 is a binding site for K(+). The K(+) site is built by Ala-246, Gly-247, and Ala-249. Residue Ser-250 participates in CoA binding. Val-347 contacts K(+). Active-site proton acceptor residues include His-351 and Cys-379.

It belongs to the thiolase-like superfamily. Thiolase family.

The protein localises to the peroxisome. It carries out the reaction 2 acetyl-CoA = acetoacetyl-CoA + CoA. Functionally, essential for n-decane utilization. In Yarrowia lipolytica (strain CLIB 122 / E 150) (Yeast), this protein is Acetyl-CoA acetyltransferase (PAT1).